Here is a 204-residue protein sequence, read N- to C-terminus: MTNIFTPIEEALEAYKNGEFLIVMDDEDRENEGDLIMAAELITQEKMAFLVRYSSGYVCVPLSEERANQLELPPMLANRSDRHGTAYTITCDFAEGTTTGISAHDRALTTRSLANPNSKPQDFIKPGHILPLRAVPGLLKKRRGHTEAAVQLSTLAGLQPAGVICELVRDEDGLMMRLDDCIQFGKKHGIKIININQLVEYISK.

E30 provides a ligand contact to Mg(2+). D34 is a D-ribulose 5-phosphate binding site. C59 is subject to S-glutathionyl cysteine. Residues T85 and R142–T146 each bind D-ribulose 5-phosphate. Residue H145 participates in Mg(2+) binding.

As to quaternary structure, homodimer. Mg(2+) is required as a cofactor. It depends on Mn(2+) as a cofactor. Post-translationally, S-glutathionylation is reversible and dependent on a glutaredoxin.

The enzyme catalyses D-ribulose 5-phosphate = (2S)-2-hydroxy-3-oxobutyl phosphate + formate + H(+). It functions in the pathway cofactor biosynthesis; riboflavin biosynthesis; 2-hydroxy-3-oxobutyl phosphate from D-ribulose 5-phosphate: step 1/1. Catalyzes the conversion of D-ribulose 5-phosphate to formate and 3,4-dihydroxy-2-butanone 4-phosphate. This is 3,4-dihydroxy-2-butanone 4-phosphate synthase (RIB3) from Candida albicans (strain SC5314 / ATCC MYA-2876) (Yeast).